The chain runs to 621 residues: Rab11 family-interacting protein 4A (621 aa).

EF-hand domains follow at residues 14–49 and 47–82; these read AFLKKLKEVFDVCDEDADGYIRVEHFVDLGLQFGQG and GQGDEVKKFAKYLDPNAHGRINFKDFCHGVFAIKGC. Ca(2+)-binding residues include aspartate 27, aspartate 29, aspartate 31, tyrosine 33, histidine 38, aspartate 60, asparagine 62, arginine 66, and aspartate 71. 2 disordered regions span residues 132–172 and 203–243; these read YSDE…KEEG and DYGE…GQTP. Residues 151 to 161 show a composition bias toward low complexity; that stretch reads AADSGAGSESS. Residues 162–172 show a composition bias toward basic and acidic residues; the sequence is EGGRQDDKEEG. Positions 225–243 are enriched in polar residues; that stretch reads TNGFSDLGSSLPSSAGQTP. Residues 348 to 556 are a coiled coil; it reads DLKSKLKQEN…LNGQILSLSL (209 aa). The region spanning 558–620 is the FIP-RBD domain; it reads EAKNLFACHT…DHNPSILEIK (63 aa).

As to quaternary structure, homodimer. Forms a complex with Rab11 (rab11a or rab11b) and arf6. Isoform 1 is predominantly expressed in neural tissues. Isoform B is expressed ubiquitously. In the developing retina, it is expressed in progenitors throughout the retina at early stages and becomes restricted to the ganglion cell layer and ciliary marginal zone as differentiation proceeds.

It localises to the recycling endosome membrane. The protein localises to the cleavage furrow. It is found in the midbody. Its subcellular location is the cytoplasmic vesicle. Acts as a regulator of endocytic traffic by participating in membrane delivery. Required for the abscission step in cytokinesis, possibly by acting as an 'address tag' delivering recycling endosome membranes to the cleavage furrow during late cytokinesis. May play a role in differentiation during retinal development. The sequence is that of Rab11 family-interacting protein 4A (rab11fip4a) from Danio rerio (Zebrafish).